The chain runs to 234 residues: Glucosamine-6-phosphate deaminase (234 aa).

D62 functions as the Proton acceptor; for enolization step in the catalytic mechanism. N128 functions as the For ring-opening step in the catalytic mechanism. Residue H130 is the Proton acceptor; for ring-opening step of the active site. The For ring-opening step role is filled by E135.

It belongs to the glucosamine/galactosamine-6-phosphate isomerase family. NagB subfamily.

The catalysed reaction is alpha-D-glucosamine 6-phosphate + H2O = beta-D-fructose 6-phosphate + NH4(+). The protein operates within amino-sugar metabolism; N-acetylneuraminate degradation; D-fructose 6-phosphate from N-acetylneuraminate: step 5/5. Functionally, catalyzes the reversible isomerization-deamination of glucosamine 6-phosphate (GlcN6P) to form fructose 6-phosphate (Fru6P) and ammonium ion. The chain is Glucosamine-6-phosphate deaminase from Streptococcus pyogenes serotype M1.